The following is an 86-amino-acid chain: Exodeoxyribonuclease 7 small subunit (86 aa).

The segment at 67–86 is disordered; sequence LSDPAQPEASEPFDPPSHDG.

This sequence belongs to the XseB family. In terms of assembly, heterooligomer composed of large and small subunits.

It localises to the cytoplasm. It carries out the reaction Exonucleolytic cleavage in either 5'- to 3'- or 3'- to 5'-direction to yield nucleoside 5'-phosphates.. Its function is as follows. Bidirectionally degrades single-stranded DNA into large acid-insoluble oligonucleotides, which are then degraded further into small acid-soluble oligonucleotides. This Stenotrophomonas maltophilia (strain K279a) protein is Exodeoxyribonuclease 7 small subunit.